The primary structure comprises 183 residues: Proton-transporting V-type ATPase complex assembly regulator TMEM9 (183 aa).

Residues 1–20 (MKLLCLVAVVGCLLVPPAQA) form the signal peptide. N21, N38, and N47 each carry an N-linked (GlcNAc...) asparagine glycan. Over 21 to 89 (NKSSEDIRCK…YEERSTTTIK (69 aa)) the chain is Extracellular. Residues 90–110 (VIIVIYLSVVGALLLYMAFLM) form a helical membrane-spanning segment. Topologically, residues 111–183 (LVDPLIRKPD…TVFDRHKMLS (73 aa)) are cytoplasmic. Residue S144 is modified to Phosphoserine.

This sequence belongs to the TMEM9 family. In terms of assembly, interacts with the v-ATPase accessory protein ATP6AP2 and with the v-ATPase complex subunit ATP6V0D1; these interactions lead to the assembly of the v-ATPase complex. In terms of processing, N-glycosylated. As to expression, expressed in heart, lung, kidney, liver and intestines. Enriched in the hepatocytes around the central vein.

It is found in the lysosome membrane. The protein localises to the late endosome membrane. The protein resides in the endosome. It localises to the multivesicular body membrane. Functionally, transmembrane protein that binds to and facilitates the assembly of lysosomal proton-transporting V-type ATPase (v-ATPase), resulting in enhanced lysosomal acidification and trafficking. By bringing the v-ATPase accessory protein ATP6AP2 and the v-ATPase subunit ATP6V0D1 together, allows v-ATPase complex formation and activation. TMEM9-controlled vesicular acidification induces hyperactivation of Wnt/beta-catenin signaling, involved in development, tissue homeostasis and tissue regeneration, through lysosomal degradation of adenomatous polyposis coli/APC. In the liver, involved in hepatic regeneration. The chain is Proton-transporting V-type ATPase complex assembly regulator TMEM9 from Mus musculus (Mouse).